Consider the following 299-residue polypeptide: Bifunctional protein FolD (299 aa).

Residues 168–170 (GRS), Ser193, and Ile234 contribute to the NADP(+) site.

It belongs to the tetrahydrofolate dehydrogenase/cyclohydrolase family. As to quaternary structure, homodimer.

It carries out the reaction (6R)-5,10-methylene-5,6,7,8-tetrahydrofolate + NADP(+) = (6R)-5,10-methenyltetrahydrofolate + NADPH. It catalyses the reaction (6R)-5,10-methenyltetrahydrofolate + H2O = (6R)-10-formyltetrahydrofolate + H(+). Its pathway is one-carbon metabolism; tetrahydrofolate interconversion. Its function is as follows. Catalyzes the oxidation of 5,10-methylenetetrahydrofolate to 5,10-methenyltetrahydrofolate and then the hydrolysis of 5,10-methenyltetrahydrofolate to 10-formyltetrahydrofolate. The chain is Bifunctional protein FolD from Bartonella bacilliformis (strain ATCC 35685 / KC583 / Herrer 020/F12,63).